The sequence spans 530 residues: PC4 and SFRS1-interacting protein (530 aa).

Residues 1–64 form the PWWP domain; it reads MTRDFKPGDL…PKDIFPYSEN (64 aa). A Glycyl lysine isopeptide (Lys-Gly) (interchain with G-Cter in SUMO2) cross-link involves residue K75. A disordered region spans residues 88–349; that stretch reads PKVKFSSQQA…VEKKRETSMD (262 aa). The span at 92–104 shows a compositional bias: polar residues; sequence FSSQQAATKQSNA. Residues S102, S105, and S106 each carry the phosphoserine modification. Residues 113–135 show a composition bias toward basic and acidic residues; that stretch reads KETSVSKEDTDHEEKASNEDVTK. T115 and T122 each carry phosphothreonine. S129 is subject to Phosphoserine. A Phosphothreonine modification is found at T141. The segment covering 144–153 has biased composition (basic residues); it reads AARRGRKRKA. A Nuclear localization signal motif is present at residues 146 to 156; sequence RRGRKRKAEKQ. Position 167 is a phosphothreonine (T167). S177 and S206 each carry phosphoserine. Residues 213-261 show a composition bias toward basic and acidic residues; that stretch reads EEDKSKKKGQEEKQPKKQPKKDEEGQKEEDKPRKEPDKKEGKKEVESKR. S271 carries the post-translational modification Phosphoserine. T272 is subject to Phosphothreonine. 2 positions are modified to phosphoserine: S273 and S275. The span at 274–283 shows a compositional bias: acidic residues; the sequence is DSEEEGDDQE. Over residues 287–302 the composition is skewed to basic residues; that stretch reads KRKGGRNFQTAHRRNM. Residues 305 to 349 are compositionally biased toward basic and acidic residues; that stretch reads GQHEKEAADRKRKQEEQMETEQQNKDEGKKPEVKKVEKKRETSMD. Coiled coils occupy residues 306–334 and 371–395; these read QHEKEAADRKRKQEEQMETEQQNKDEGKK and NRCIEALDELASLQVTMQQAQKHTE. Residues 340 to 417 form an integrase-binding domain (IBD) region; it reads VEKKRETSMD…VSQVIMEKST (78 aa). Phosphoserine is present on S434. T437 is subject to Phosphothreonine. A Phosphoserine modification is found at S443. A compositionally biased stretch (basic and acidic residues) spans 446 to 473; sequence EQRQHEEANKTKDQGKKGPNKKLEKEQT. A disordered region spans residues 446–530; it reads EQRQHEEANK…ISLKDSTLDN (85 aa). Over residues 474-494 the composition is skewed to polar residues; sequence GSKTLNGGSDAQDGNQPQHNG. Basic and acidic residues predominate over residues 498–530; sequence EDSKDNHEASTKKKPSSEERETEISLKDSTLDN. S514 is modified (phosphoserine). The residue at position 517 (R517) is a Citrulline. Position 522 is a phosphoserine (S522). Position 527 is a phosphothreonine (T527).

It belongs to the HDGF family. In terms of assembly, monomer. Interacts with IFRD1/PC4. Isoform 2 interacts with SFRS1. Isoform 1 interacts (via IBD domain) with POGZ (via IBM motif) and CDCA7L (via IBM motifs). Interacts (via IBD domain) with KMT2A (via IBM motifs) with a moderate affinity whereas interacts with the KMT2A-MEN1 complex with a greater affinity; MEN1 enhances interaction of KMT2A with PSIP1. Interacts with fusion protein KMT2A-MLLT3. Interacts (via IBD domain) with IWS1 (via IBM motif), MED1 (via IBM motif) and DBF4 (via IBM motifs). As to quaternary structure, (Microbial infection) Interacts (via IBD domain) with human HIV-1 integrase protein (HIV-1 IN), determining its nuclear localization, its tight association with chromatin and its protection from the proteasome. (Microbial infection) Interacts with HIV-2 IN. Post-translationally, citrullinated by PADI4. Widely expressed. Expressed at high level in the thymus. Expressed in fetal and adult brain. Expressed in neurons, but not astrocytes. Markedly elevated in fetal as compared to adult brain. In the adult brain, expressed in the subventricular zone (SVZ), in hippocampus, and undetectable elsewhere. In the fetal brain, expressed in the germinal neuroepithelium and cortical plate regions.

Its subcellular location is the nucleus. In terms of biological role, transcriptional coactivator involved in neuroepithelial stem cell differentiation and neurogenesis. Involved in particular in lens epithelial cell gene regulation and stress responses. May play an important role in lens epithelial to fiber cell terminal differentiation. May play a protective role during stress-induced apoptosis. Isoform 2 is a more general and stronger transcriptional coactivator. Isoform 2 may also act as an adapter to coordinate pre-mRNA splicing. Cellular cofactor for lentiviral integration. This Homo sapiens (Human) protein is PC4 and SFRS1-interacting protein (PSIP1).